A 355-amino-acid polypeptide reads, in one-letter code: Peptide chain release factor 1 (355 aa).

Q233 is modified (N5-methylglutamine). A compositionally biased stretch (basic and acidic residues) spans 281–293 (RRNKEQERADSRR). Residues 281 to 308 (RRNKEQERADSRRGQIGSGDRSERIRTY) form a disordered region.

The protein belongs to the prokaryotic/mitochondrial release factor family. Methylated by PrmC. Methylation increases the termination efficiency of RF1.

It localises to the cytoplasm. Peptide chain release factor 1 directs the termination of translation in response to the peptide chain termination codons UAG and UAA. This chain is Peptide chain release factor 1, found in Rickettsia akari (strain Hartford).